A 327-amino-acid chain; its full sequence is Cyclic AMP-responsive element-binding protein 1 (327 aa).

2 disordered regions span residues 1-27 (MTMESGADNQQSGDAAVTEAENQQMTV) and 94-113 (SEDSQESVDSVTDSQKRREI). Positions 87-146 (QISTIAESEDSQESVDSVTDSQKRREILSRRPSYRKILNDLSSDAPGVPRIEEEKSEEET) constitute a KID domain. S119 carries the post-translational modification Phosphoserine; by CaMK1, CaMK2, CaMK4, PKB/AKT1 or PKB/AKT2, RPS6KA3, RPS6KA4, RPS6KA5 and SGK1. A Glycyl lysine isopeptide (Lys-Gly) (interchain with G-Cter in SUMO2) cross-link involves residue K122. The segment at 126 to 151 (DLSSDAPGVPRIEEEKSEEETSAPAI) is disordered. S128 is subject to Phosphoserine; by CaMK2. A Phosphoserine; by HIPK2 modification is found at S257. One can recognise a bZIP domain in the interval 269–327 (ARKREVRLMKNREAARECRRKKKEYVKCLENRVAVLENQNKTLIEELKALKDLYCHKSD). The basic motif stretch occupies residues 270-295 (RKREVRLMKNREAARECRRKKKEYVK). Glycyl lysine isopeptide (Lys-Gly) (interchain with G-Cter in SUMO1) cross-links involve residues K271 and K290. Residues 297 to 318 (LENRVAVLENQNKTLIEELKAL) are leucine-zipper.

This sequence belongs to the bZIP family. As to quaternary structure, interacts with PPRC1. Binds DNA as a dimer. This dimer is stabilized by magnesium ions. Interacts, through the bZIP domain, with the coactivators CRTC1/TORC1, CRTC2/TORC2 and CRTC3/TORC3. Interacts (phosphorylated form) with TOX3. When phosphorylated on Ser-119, binds CREBBP. Interacts with ARRB1. Binds to HIPK2. Interacts with SGK1. Interacts with CREBL2; regulates CREB1 phosphorylation, stability and transcriptional activity. Interacts with TSSK4; this interaction facilitates phosphorylation on Ser-119. Forms a complex with KMT2A and CREBBP. Interacts with TOX4; CREB1 is required for full induction of TOX4-dependent activity and the interaction is increased by cAMP and inhibited by insulin. Phosphorylation of Ser-119 allows CREBBP binding. Stimulated by phosphorylation. Phosphorylated Ser-128 can be detected in the suprachiasmatic nucleus (SCN), the amygdala, the cortex, and the hippocampus but not in the striatum nor in the cerebellum. In the SCN, phosphorylation of Ser-128 and Ser-119 are stimulated by light exposure and submitted to circadian oscillations. In the retina, only phosphorylation of Ser-119 can be detected upon light exposure. Phosphorylation of both Ser-119 and Ser-128 in the SCN regulates the activity of CREB and participates in circadian rhythm generation. Phosphorylated upon calcium influx by CaMK4 and CaMK2 on Ser-119. CaMK4 is much more potent than CAMK2 in activating CREB. Phosphorylated by CaMK2 on Ser-128. Phosphorylation of Ser-128 blocks CREB-mediated transcription even when Ser-119 is phosphorylated. Phosphorylated by CaMK1. Phosphorylation of Ser-271 by HIPK2 in response to genotoxic stress promotes CREB1 activity, facilitating the recruitment of the coactivator CBP. Phosphorylated at Ser-119 by RPS6KA3, RPS6KA4 and RPS6KA5 in response to mitogenic or stress stimuli. CREBL2 positively regulates phosphorylation at Ser-119 thereby stimulating CREB1 transcriptional activity. In liver, phosphorylation is induced by fasting or glucagon in a circadian fashion. Phosphorylated by TSSK4 on Ser-119. In terms of processing, sumoylated with SUMO1. Sumoylation on Lys-290, but not on Lys-271, is required for nuclear localization of this protein. Sumoylation is enhanced under hypoxia, promoting nuclear localization and stabilization. In terms of tissue distribution, expressed in the heart (at protein level).

The protein resides in the nucleus. Functionally, phosphorylation-dependent transcription factor that stimulates transcription upon binding to the DNA cAMP response element (CRE), a sequence present in many viral and cellular promoters. Transcription activation is enhanced by the TORC coactivators which act independently of Ser-119 phosphorylation. Involved in different cellular processes including the synchronization of circadian rhythmicity and the differentiation of adipose cells. Regulates the expression of apoptotic and inflammatory response factors in cardiomyocytes in response to ERFE-mediated activation of AKT signaling. This chain is Cyclic AMP-responsive element-binding protein 1 (Creb1), found in Mus musculus (Mouse).